The chain runs to 302 residues: Putative peptide permease protein BMEII0861 (302 aa).

A disordered region spans residues 1–22 (MRSSIHASRLRKMGQSIPASTG). The next 5 membrane-spanning stretches (helical) occupy residues 38 to 58 (IFGL…PLWL), 101 to 121 (LLVA…IGAI), 147 to 167 (IFLL…VVVI), 230 to 250 (ILLE…AASW), and 268 to 288 (WQWL…NFIG). The 192-residue stretch at 97–288 (GRISLLVAVS…LAVLAINFIG (192 aa)) folds into the ABC transmembrane type-1 domain.

It belongs to the binding-protein-dependent transport system permease family. The complex is composed of two ATP-binding proteins (BMEII0863 and BMEII0864), two transmembrane proteins (BMEII0860 and BMEII0861) and a solute-binding protein (BMEII0859).

It localises to the cell inner membrane. Functionally, probably part of an ABC transporter complex that could be involved in peptide import. Probably responsible for the translocation of the substrate across the membrane. The polypeptide is Putative peptide permease protein BMEII0861 (Brucella melitensis biotype 1 (strain ATCC 23456 / CCUG 17765 / NCTC 10094 / 16M)).